The following is a 70-amino-acid chain: Large ribosomal subunit protein eL38 (70 aa).

This sequence belongs to the eukaryotic ribosomal protein eL38 family.

The sequence is that of Large ribosomal subunit protein eL38 (RpL38) from Lonomia obliqua (Moth).